The primary structure comprises 331 residues: MKTSIRYALLAAALTAATPALADITVYNGQHKEAAQAVADAFTRATGIKVKLNSAKGDQLAGQIKEEGSRSPADVFYSEQIPALATLSAANLLEPLPASTINETRGKGVPVAAKKDWVALSGRSRVVVYDTRKLSEKDLEKSVLNYATPKWKNRIGYAPTSGAFLEQVVAIVKLKGEAAALKWLKGLKEYGKPYAKNSVALQAVENGEIDAALINNYYWHAFAREKGVQNVHTRLNFVRHRDPGALITYSGAAVLKSSQNKDEAKKFVAFLASKEGQRALTAVRAEYPLNPHVVSTFNLEPIAKLEAPQVSATTVSEKEHATRLLEQAGMK.

The N-terminal stretch at 1 to 22 (MKTSIRYALLAAALTAATPALA) is a signal peptide. Fe cation is bound by residues histidine 31, glutamate 79, tyrosine 217, and tyrosine 218.

This sequence belongs to the bacterial solute-binding protein 1 family.

The protein localises to the periplasm. In terms of biological role, this protein may be a central component in the iron-acquisition system. This Neisseria meningitidis serogroup A / serotype 4A (strain DSM 15465 / Z2491) protein is Major ferric iron-binding protein (fbpA).